Here is a 2196-residue protein sequence, read N- to C-terminus: Genome polyprotein (2196 aa).

G2 carries N-myristoyl glycine; by host lipidation. Topologically, residues 2 to 1506 are cytoplasmic; that stretch reads GAQVSTQKTG…HVSRAFICLQ (1505 aa). An amphipathic alpha-helix region spans residues 568 to 584; that stretch reads DLQGDSEHAVESAVSRV. Residues H883 and D901 each act as for protease 2A activity in the active site. Zn(2+)-binding residues include C918 and C920. The active-site For protease 2A activity is C972. Zn(2+) contacts are provided by C978 and H980. Residues 1112-1184 form a membrane-binding region; sequence NNGWLKKFTE…EQSAPSQSDQ (73 aa). The segment at 1112–1250 is oligomerization; that stretch reads NNGWLKKFTE…SPGAGKSVAT (139 aa). The interval 1133–1137 is RNA-binding; it reads AIKIQ. The SF3 helicase domain occupies 1216 to 1372; the sequence is EKKMSNYIQF…SMYSQNGKIN (157 aa). Zn(2+)-binding residues include C1380, C1392, and C1397. The C4-type; degenerate zinc finger occupies 1380–1397; it reads CDEECCPVNFKKCCPLVC. An RNA-binding region spans residues 1424 to 1431; the sequence is EYNHRHSV. The tract at residues 1435–1440 is oligomerization; it reads LEALFQ. Residues 1507-1522 lie within the membrane without spanning it; it reads ALTTFVSVAGIIYIIY. The Cytoplasmic segment spans residues 1523-2196; the sequence is KLFAGFQGAY…TLRRKWLDSF (674 aa). The residue at position 1532 (Y1532) is an O-(5'-phospho-RNA)-tyrosine. In terms of domain architecture, Peptidase C3 spans 1552–1730; that stretch reads GPAFEFAVAM…FSAALLKHYF (179 aa). Active-site for protease 3C activity residues include H1591, E1622, and C1698. In terms of domain architecture, RdRp catalytic spans 1961-2077; the sequence is GHLIAFDYSG…SYPWPIDASL (117 aa). 2 residues coordinate Mg(2+): D1967 and D2063.

This sequence belongs to the picornaviruses polyprotein family. In terms of assembly, interacts with capsid protein VP1 and capsid protein VP3 to form heterotrimeric protomers. Interacts with capsid protein VP0, and capsid protein VP3 to form heterotrimeric protomers. Five protomers subsequently associate to form pentamers which serve as building blocks for the capsid. Interacts with capsid protein VP2, capsid protein VP3 and capsid protein VP4 following cleavage of capsid protein VP0. As to quaternary structure, interacts with capsid protein VP1 and capsid protein VP3 in the mature capsid. In terms of assembly, interacts with capsid protein VP0 and capsid protein VP1 to form heterotrimeric protomers. Five protomers subsequently associate to form pentamers which serve as building blocks for the capsid. Interacts with capsid protein VP4 in the mature capsid. Interacts with protein 2C; this interaction may be important for virion morphogenesis. Interacts with capsid protein VP1 and capsid protein VP3. As to quaternary structure, homodimer. In terms of assembly, homohexamer; forms a hexameric ring structure with 6-fold symmetry characteristic of AAA+ ATPases. Interacts (via N-terminus) with host RTN3 (via reticulon domain); this interaction is important for viral replication. Interacts with capsid protein VP3; this interaction may be important for virion morphogenesis. Interacts with protein 3CD. As to quaternary structure, homodimer. Interacts with host GBF1. Interacts (via GOLD domain) with host ACBD3 (via GOLD domain); this interaction allows the formation of a viral protein 3A/ACBD3 heterotetramer with a 2:2 stoichiometry, which will stimulate the recruitment of host PI4KB in order to synthesize PI4P at the viral RNA replication sites. In terms of assembly, interacts with RNA-directed RNA polymerase. Interacts with protein 3AB and with RNA-directed RNA polymerase. As to quaternary structure, interacts with Viral protein genome-linked and with protein 3CD. Requires Mg(2+) as cofactor. Specific enzymatic cleavages in vivo by the viral proteases yield processing intermediates and the mature proteins. In terms of processing, myristoylation is required for the formation of pentamers during virus assembly. Further assembly of 12 pentamers and a molecule of genomic RNA generates the provirion. Post-translationally, during virion maturation, immature virions are rendered infectious following cleavage of VP0 into VP4 and VP2. This maturation seems to be an autocatalytic event triggered by the presence of RNA in the capsid and it is followed by a conformational change infectious virion. Myristoylation is required during RNA encapsidation and formation of the mature virus particle. In terms of processing, VPg is uridylylated by the polymerase into VPg-pUpU. This acts as a nucleotide-peptide primer for the genomic RNA replication.

Its subcellular location is the virion. The protein resides in the host cytoplasm. It is found in the host cytoplasmic vesicle membrane. It localises to the host nucleus. It catalyses the reaction a ribonucleoside 5'-triphosphate + H2O = a ribonucleoside 5'-diphosphate + phosphate + H(+). The catalysed reaction is Selective cleavage of Tyr-|-Gly bond in the picornavirus polyprotein.. The enzyme catalyses RNA(n) + a ribonucleoside 5'-triphosphate = RNA(n+1) + diphosphate. It carries out the reaction Selective cleavage of Gln-|-Gly bond in the poliovirus polyprotein. In other picornavirus reactions Glu may be substituted for Gln, and Ser or Thr for Gly.. Its activity is regulated as follows. Replication or transcription is subject to high level of random mutations by the nucleotide analog ribavirin. In terms of biological role, forms an icosahedral capsid of pseudo T=3 symmetry with capsid proteins VP2 and VP3. The capsid is 300 Angstroms in diameter, composed of 60 copies of each capsid protein and enclosing the viral positive strand RNA genome. Capsid protein VP1 mainly forms the vertices of the capsid. Capsid protein VP1 interacts with host cell receptor to provide virion attachment to target host cells. This attachment induces virion internalization. Tyrosine kinases are probably involved in the entry process. After binding to its receptor, the capsid undergoes conformational changes. Capsid protein VP1 N-terminus (that contains an amphipathic alpha-helix) and capsid protein VP4 are externalized. Together, they shape a pore in the host membrane through which viral genome is translocated to host cell cytoplasm. Forms an icosahedral capsid of pseudo T=3 symmetry with capsid proteins VP2 and VP3. The capsid is 300 Angstroms in diameter, composed of 60 copies of each capsid protein and enclosing the viral positive strand RNA genome. Functionally, lies on the inner surface of the capsid shell. After binding to the host receptor, the capsid undergoes conformational changes. Capsid protein VP4 is released, Capsid protein VP1 N-terminus is externalized, and together, they shape a pore in the host membrane through which the viral genome is translocated into the host cell cytoplasm. Its function is as follows. Component of immature procapsids, which is cleaved into capsid proteins VP4 and VP2 after maturation. Allows the capsid to remain inactive before the maturation step. In terms of biological role, cysteine protease that cleaves viral polyprotein and specific host proteins. It is responsible for the autocatalytic cleavage between the P1 and P2 regions, which is the first cleavage occurring in the polyprotein. Also cleaves the host translation initiation factor EIF4G1, in order to shut down the capped cellular mRNA translation. Inhibits the host nucleus-cytoplasm protein and RNA trafficking by cleaving host members of the nuclear pores. Counteracts stress granule formation probably by antagonizing its assembly or promoting its dissassembly. Plays an essential role in the virus replication cycle by acting as a viroporin. Creates a pore in the host endoplasmic reticulum and as a consequence releases Ca2+ in the cytoplasm of infected cell. In turn, high levels of cytoplasmic calcium may trigger membrane trafficking and transport of viral ER-associated proteins to viroplasms, sites of viral genome replication. Functionally, induces and associates with structural rearrangements of intracellular membranes. Displays RNA-binding, nucleotide binding and NTPase activities. May play a role in virion morphogenesis and viral RNA encapsidation by interacting with the capsid protein VP3. Its function is as follows. Localizes the viral replication complex to the surface of membranous vesicles. Together with protein 3CD binds the Cis-Active RNA Element (CRE) which is involved in RNA synthesis initiation. Acts as a cofactor to stimulate the activity of 3D polymerase, maybe through a nucleid acid chaperone activity. In terms of biological role, localizes the viral replication complex to the surface of membranous vesicles. It inhibits host cell endoplasmic reticulum-to-Golgi apparatus transport and causes the disassembly of the Golgi complex, possibly through GBF1 interaction. This would result in depletion of MHC, trail receptors and IFN receptors at the host cell surface. Plays an essential role in viral RNA replication by recruiting ACBD3 and PI4KB at the viral replication sites, thereby allowing the formation of the rearranged membranous structures where viral replication takes place. Acts as a primer for viral RNA replication and remains covalently bound to viral genomic RNA. VPg is uridylylated prior to priming replication into VPg-pUpU. The oriI viral genomic sequence may act as a template for this. The VPg-pUpU is then used as primer on the genomic RNA poly(A) by the RNA-dependent RNA polymerase to replicate the viral genome. During genome replication, the VPg-RNA linkage is removed by the host TDP2, thereby accelerating replication. During the late stage of the replication cycle, host TDP2 is excluded from sites of viral RNA synthesis and encapsidation, allowing for the generation of progeny virions. Functionally, involved in the viral replication complex and viral polypeptide maturation. It exhibits protease activity with a specificity and catalytic efficiency that is different from protease 3C. Protein 3CD lacks polymerase activity. Protein 3CD binds to the 5'UTR of the viral genome. Its function is as follows. Replicates the viral genomic RNA on the surface of intracellular membranes. May form linear arrays of subunits that propagate along a strong head-to-tail interaction called interface-I. Covalently attaches UMP to a tyrosine of VPg, which is used to prime RNA synthesis. The positive stranded RNA genome is first replicated at virus induced membranous vesicles, creating a dsRNA genomic replication form. This dsRNA is then used as template to synthesize positive stranded RNA genomes. ss(+)RNA genomes are either translated, replicated or encapsidated. In terms of biological role, major viral protease that mediates proteolytic processing of the polyprotein. Cleaves host EIF5B, contributing to host translation shutoff. Also cleaves host PABPC1, contributing to host translation shutoff. Cleaves host NLRP1, triggers host N-glycine-mediated degradation of the autoinhibitory NLRP1 N-terminal fragment. The chain is Genome polyprotein from Homo sapiens (Human).